The primary structure comprises 78 residues: Small ribosomal subunit protein bS18 (78 aa).

It belongs to the bacterial ribosomal protein bS18 family. As to quaternary structure, part of the 30S ribosomal subunit. Forms a tight heterodimer with protein bS6.

In terms of biological role, binds as a heterodimer with protein bS6 to the central domain of the 16S rRNA, where it helps stabilize the platform of the 30S subunit. This Pseudothermotoga lettingae (strain ATCC BAA-301 / DSM 14385 / NBRC 107922 / TMO) (Thermotoga lettingae) protein is Small ribosomal subunit protein bS18.